The chain runs to 316 residues: Ribosomal protein L11 methyltransferase (316 aa).

Residues threonine 159, glycine 179, aspartate 201, and asparagine 243 each contribute to the S-adenosyl-L-methionine site.

Belongs to the methyltransferase superfamily. PrmA family.

It localises to the cytoplasm. The enzyme catalyses L-lysyl-[protein] + 3 S-adenosyl-L-methionine = N(6),N(6),N(6)-trimethyl-L-lysyl-[protein] + 3 S-adenosyl-L-homocysteine + 3 H(+). In terms of biological role, methylates ribosomal protein L11. This is Ribosomal protein L11 methyltransferase from Gloeobacter violaceus (strain ATCC 29082 / PCC 7421).